The sequence spans 221 residues: Lactate racemization regulatory protein (221 aa).

Residues 139 to 213 form the HTH crp-type domain; it reads NGKKGAICAF…NHKFIIQDVS (75 aa). Positions 172 to 192 form a DNA-binding region, H-T-H motif; the sequence is NDDIAGFCGISSRSSVNRMLK.

In terms of assembly, multimerizes on DNA. Multimerization is required for transcription activation.

Its activity is regulated as follows. L-lactate acts as a positive effector on the binding and multimerization of LarR on DNA, while D-lactate antagonizes the positive effect of L-lactate. Positive transcriptional regulator that is absolutely required for the expression of lactate racemase (Lar) activity. Controls Lar expression by sensing the L-/D-lactate ration. Binds to a 16-bp palindromic sequence (Lar box motif) that is present in the larR-larA intergenic region, allowing transcription of the larABCDE operon. In Lactiplantibacillus plantarum (strain ATCC BAA-793 / NCIMB 8826 / WCFS1) (Lactobacillus plantarum), this protein is Lactate racemization regulatory protein.